Reading from the N-terminus, the 238-residue chain is MAADGQCSLPASWRPVTLTHVEYPAGDLSGHLLAYLSLSPVFVIVGFVTLIIFKRELHTISFLGGLALNEGVNWLIKNVIQEPRPCGGPHTAVGTKYGMPSSHSQFMWFFSVYSFLFLYLRMHQTNNARFLDLLWRHVLSLGLLAVAFLVSYSRVYLLYHTWSQVLYGGIAGGLMAIAWFIFTQEVLTPLFPRIAAWPVSEFFLIRDTSLIPNVLWFEYTVTRAEARNRQRKLGTKLQ.

Transmembrane regions (helical) follow at residues 33–53, 100–120, 130–150, and 162–182; these read LAYL…LIIF, PSSH…FLYL, FLDL…AFLV, and WSQV…WFIF.

It belongs to the dolichyldiphosphatase family.

It is found in the endoplasmic reticulum membrane. It carries out the reaction a di-trans,poly-cis-dolichyl diphosphate + H2O = a di-trans,poly-cis-dolichyl phosphate + phosphate + H(+). It functions in the pathway protein modification; protein glycosylation. Functionally, required for efficient N-glycosylation. Necessary for maintaining optimal levels of dolichol-linked oligosaccharides. Hydrolyzes dolichyl pyrophosphate at a very high rate and dolichyl monophosphate at a much lower rate. Does not act on phosphatidate. In Homo sapiens (Human), this protein is Dolichyldiphosphatase 1 (DOLPP1).